The sequence spans 247 residues: Cell division protein ZapD (247 aa).

Belongs to the ZapD family. Interacts with FtsZ.

The protein resides in the cytoplasm. In terms of biological role, cell division factor that enhances FtsZ-ring assembly. Directly interacts with FtsZ and promotes bundling of FtsZ protofilaments, with a reduction in FtsZ GTPase activity. The sequence is that of Cell division protein ZapD from Shigella flexneri.